Reading from the N-terminus, the 817-residue chain is Protein Jade-3 (817 aa).

Residues 1-38 are disordered; the sequence is MKRLRNLSSSDSSDNESPSTSFSSCFQHKGKGKCTADD. Over residues 8–24 the composition is skewed to low complexity; sequence SSSDSSDNESPSTSFSS. Residues 202–252 form a PHD-type 1 zinc finger; that stretch reads DVICDVCRSPDSEEGNDMVFCDRCNICVHQACYGILKVPEGSWLCRTCVLG. Residues 254-288 form a C2HC pre-PHD-type zinc finger; sequence HPQCILCPKTGGAMKATRTGTKWAHVSCALWIPEV. A PHD-type 2 zinc finger spans residues 312–368; that stretch reads LVCSLCKLKTGACIQCSVKSCITAFHVTCAFEHSLEMKTILDEGDEVKFKSYCLKHS. 3 disordered regions span residues 375 to 396, 665 to 689, and 719 to 817; these read ISEQ…SERT, NGVL…QNSE, and LVRT…SVQR. Over residues 379–396 the composition is skewed to basic and acidic residues; the sequence is EEPHKTHSDNRPTESERT. Polar residues predominate over residues 667-689; sequence VLSSGDRTQRDSSSQTSPGQNSE. A compositionally biased stretch (basic and acidic residues) spans 722-743; the sequence is TTEDLRSSEKPQRRQSVKERLW. Residues 747 to 758 are compositionally biased toward polar residues; the sequence is PADTQTSGTPYQ. A compositionally biased stretch (basic and acidic residues) spans 777–799; it reads DENKDHMLLRRNSRESPNRDSCR. A compositionally biased stretch (basic residues) spans 801–810; the sequence is SRIRGKRKMT.

This sequence belongs to the JADE family. As to quaternary structure, component of the HBO1 complex.

Functionally, scaffold subunit of some HBO1 complexes, which have a histone H4 acetyltransferase activity. This Xenopus tropicalis (Western clawed frog) protein is Protein Jade-3 (jade3).